A 179-amino-acid polypeptide reads, in one-letter code: DNA utilization protein HofN (179 aa).

The helical transmembrane segment at 19–39 threads the bilayer; sequence LRFWLLMFVAPLLLAVGITLI.

It is found in the cell inner membrane. Functionally, required for the use of extracellular DNA as a nutrient. The protein is DNA utilization protein HofN (hofN) of Escherichia coli (strain K12).